Consider the following 875-residue polypeptide: Alanine--tRNA ligase (875 aa).

Histidine 565, histidine 569, cysteine 666, and histidine 670 together coordinate Zn(2+).

This sequence belongs to the class-II aminoacyl-tRNA synthetase family. Zn(2+) is required as a cofactor.

Its subcellular location is the cytoplasm. The catalysed reaction is tRNA(Ala) + L-alanine + ATP = L-alanyl-tRNA(Ala) + AMP + diphosphate. Its function is as follows. Catalyzes the attachment of alanine to tRNA(Ala) in a two-step reaction: alanine is first activated by ATP to form Ala-AMP and then transferred to the acceptor end of tRNA(Ala). Also edits incorrectly charged Ser-tRNA(Ala) and Gly-tRNA(Ala) via its editing domain. The sequence is that of Alanine--tRNA ligase from Methylibium petroleiphilum (strain ATCC BAA-1232 / LMG 22953 / PM1).